Reading from the N-terminus, the 321-residue chain is Corticotropin-releasing factor-binding protein (321 aa).

The first 21 residues, 1–21 (MTPASRPDWCLILLFLAVLRG), serve as a signal peptide directing secretion. 5 disulfides stabilise this stretch: cysteine 59/cysteine 80, cysteine 103/cysteine 140, cysteine 182/cysteine 204, cysteine 237/cysteine 264, and cysteine 277/cysteine 317. N-linked (GlcNAc...) asparagine glycosylation occurs at asparagine 203.

This sequence belongs to the CRF-binding protein family.

Its subcellular location is the secreted. Functionally, binds CRF and inactivates it. May prevent inappropriate pituitary-adrenal stimulation in pregnancy. The chain is Corticotropin-releasing factor-binding protein (crhbp) from Xenopus laevis (African clawed frog).